A 983-amino-acid chain; its full sequence is Importin beta-like protein kap113 (983 aa).

Residues 24–96 (AEGHLNNWKK…RCNALLGSIK (73 aa)) form the Importin N-terminal domain.

It belongs to the importin beta family.

The protein resides in the nucleus. Functionally, functions as a component of the nuclear pore complex (NPC). NPC components, collectively referred to as nucleoporins (NUPs), can play the role of both NPC structural components and of docking or interaction partners for transiently associated nuclear transport factors. Active directional transport is assured by both, a Phe-Gly (FG) repeat affinity gradient for these transport factors across the NPC and a transport cofactor concentration gradient across the nuclear envelope. Involved in the export of mRNA from the nucleus to the cytoplasm. May play a role in mitotic spindle formation and/or function. This chain is Importin beta-like protein kap113 (kap113), found in Schizosaccharomyces pombe (strain 972 / ATCC 24843) (Fission yeast).